Here is a 485-residue protein sequence, read N- to C-terminus: Subtilisin-like protease 1 (485 aa).

An N-terminal signal peptide occupies residues 1 to 19 (MGIFRFISISLAAVSAANA). A propeptide spanning residues 20 to 116 (GHILSMGHAK…VEPDTTITIH (97 aa)) is cleaved from the precursor. The region spanning 34-116 (SYIVVMKDGT…VEPDTTITIH (83 aa)) is the Inhibitor I9 domain. The Peptidase S8 domain occupies 126-400 (SWGLARISSQ…NILINNGDAK (275 aa)). Active-site charge relay system residues include aspartate 158 and histidine 190. The N-linked (GlcNAc...) asparagine glycan is linked to asparagine 251. The active-site Charge relay system is the serine 345. The segment covering 377 to 394 (GTSSVTNPGPGTRTNILI) has biased composition (polar residues). Positions 377 to 462 (GTSSVTNPGP…HTPFPNDDFN (86 aa)) are disordered. The span at 409–418 (PSQPPKPSQP) shows a compositional bias: pro residues. A compositionally biased stretch (low complexity) spans 419-428 (SKPQQPSEPQ). The segment covering 433-455 (PQEPAPGQPAPAPAPVPQHPHTP) has biased composition (pro residues).

This sequence belongs to the peptidase S8 family.

It is found in the secreted. Its function is as follows. Secreted subtilisin-like serine protease with keratinolytic activity that contributes to pathogenicity. This is Subtilisin-like protease 1 (SUB1) from Arthroderma otae (Microsporum canis).